The following is a 229-amino-acid chain: MATWAQLNFQDAASPMMEQLHYFHDHTMMVLVIITIMVAYIMGTMFFNKDVNRYLLDGQKIETEWTIVPVFVLVIIAMPSLRLLYLLDEVNEPSITLKTIGHQWYWSYEYSDFKHIEFDSYMIPYNEMEESGLRLLEVDNRTTLPMQTQVRILITAADVLHSWTVPSLGIKVDATPGRLNQTSFFINRPGIFFGQCSEICGANHSFMPIMIESVNIKSFINWIQNMSEA.

Residues 1–26 lie on the Mitochondrial intermembrane side of the membrane; the sequence is MATWAQLNFQDAASPMMEQLHYFHDH. A helical transmembrane segment spans residues 27–48; it reads TMMVLVIITIMVAYIMGTMFFN. Residues 49–62 lie on the Mitochondrial matrix side of the membrane; that stretch reads KDVNRYLLDGQKIE. A helical transmembrane segment spans residues 63 to 82; that stretch reads TEWTIVPVFVLVIIAMPSLR. At 83–229 the chain is on the mitochondrial intermembrane side; sequence LLYLLDEVNE…INWIQNMSEA (147 aa). Cu cation-binding residues include His161, Cys196, Glu198, Cys200, His204, and Met207. Glu198 serves as a coordination point for Mg(2+).

The protein belongs to the cytochrome c oxidase subunit 2 family. In terms of assembly, component of the cytochrome c oxidase (complex IV, CIV), a multisubunit enzyme composed of a catalytic core of 3 subunits and several supernumerary subunits. The complex exists as a monomer or a dimer and forms supercomplexes (SCs) in the inner mitochondrial membrane with ubiquinol-cytochrome c oxidoreductase (cytochrome b-c1 complex, complex III, CIII). The cofactor is Cu cation.

The protein localises to the mitochondrion inner membrane. It carries out the reaction 4 Fe(II)-[cytochrome c] + O2 + 8 H(+)(in) = 4 Fe(III)-[cytochrome c] + 2 H2O + 4 H(+)(out). Component of the cytochrome c oxidase, the last enzyme in the mitochondrial electron transport chain which drives oxidative phosphorylation. The respiratory chain contains 3 multisubunit complexes succinate dehydrogenase (complex II, CII), ubiquinol-cytochrome c oxidoreductase (cytochrome b-c1 complex, complex III, CIII) and cytochrome c oxidase (complex IV, CIV), that cooperate to transfer electrons derived from NADH and succinate to molecular oxygen, creating an electrochemical gradient over the inner membrane that drives transmembrane transport and the ATP synthase. Cytochrome c oxidase is the component of the respiratory chain that catalyzes the reduction of oxygen to water. Electrons originating from reduced cytochrome c in the intermembrane space (IMS) are transferred via the dinuclear copper A center (CU(A)) of subunit 2 and heme A of subunit 1 to the active site in subunit 1, a binuclear center (BNC) formed by heme A3 and copper B (CU(B)). The BNC reduces molecular oxygen to 2 water molecules using 4 electrons from cytochrome c in the IMS and 4 protons from the mitochondrial matrix. The protein is Cytochrome c oxidase subunit 2 (COII) of Sympetrum striolatum (Common darter dragonfly).